We begin with the raw amino-acid sequence, 189 residues long: Stathmin-4 (189 aa).

Residues Cys20 and Cys22 are each lipidated (S-palmitoyl cysteine). Residues Ser48–Arg189 form the SLD domain. At Ser90 the chain carries Phosphoserine. The stretch at Ser90–Ser188 forms a coiled coil. Residues Gln168–Arg189 form a disordered region.

Belongs to the stathmin family.

It localises to the golgi apparatus. The protein resides in the cell projection. Its subcellular location is the growth cone. The protein localises to the axon. Exhibits microtubule-destabilizing activity. This Homo sapiens (Human) protein is Stathmin-4 (STMN4).